A 539-amino-acid polypeptide reads, in one-letter code: Chaperonin GroEL (539 aa).

Residues 29 to 32 (TIGP), 86 to 90 (DGTTT), G413, 476 to 478 (NAA), and D492 each bind ATP.

Belongs to the chaperonin (HSP60) family. In terms of assembly, forms a cylinder of 14 subunits composed of two heptameric rings stacked back-to-back. Interacts with the co-chaperonin GroES.

It localises to the cytoplasm. It carries out the reaction ATP + H2O + a folded polypeptide = ADP + phosphate + an unfolded polypeptide.. Together with its co-chaperonin GroES, plays an essential role in assisting protein folding. The GroEL-GroES system forms a nano-cage that allows encapsulation of the non-native substrate proteins and provides a physical environment optimized to promote and accelerate protein folding. The protein is Chaperonin GroEL of Staphylococcus epidermidis (strain ATCC 12228 / FDA PCI 1200).